A 784-amino-acid polypeptide reads, in one-letter code: ATP-dependent zinc metalloprotease FTSH 9, chloroplastic/mitochondrial (784 aa).

3 stretches are compositionally biased toward low complexity: residues 1–12, 24–34, and 42–53; these read MSALQASLLLRP, PLPSSSASFPR, and PLPLRALASEGP. A chloroplast and mitochondrion-targeting transit peptide spans 1–47; the sequence is MSALQASLLLRPLPSPLPPRRRLPLPSSSASFPRAGHHRRLPLPLRA. The disordered stretch occupies residues 1–71; that stretch reads MSALQASLLL…DPPPPELPAA (71 aa). Residues 54-69 are compositionally biased toward pro residues; sequence QPAPSPAPDPPPPELP. Transmembrane regions (helical) follow at residues 104 to 124 and 267 to 287; these read WVLA…DWVV and IFST…GAAA. 368 to 375 contributes to the ATP binding site; sequence GSPGTGKT. His-601 lines the Zn(2+) pocket. Glu-602 is a catalytic residue. His-605 and Asp-679 together coordinate Zn(2+).

The protein in the N-terminal section; belongs to the AAA ATPase family. In the C-terminal section; belongs to the peptidase M41 family. Zn(2+) serves as cofactor.

Its subcellular location is the mitochondrion membrane. It is found in the plastid. It localises to the chloroplast thylakoid membrane. In terms of biological role, probable ATP-dependent zinc metallopeptidase. The protein is ATP-dependent zinc metalloprotease FTSH 9, chloroplastic/mitochondrial (FTSH9) of Oryza sativa subsp. japonica (Rice).